Consider the following 234-residue polypeptide: Polycomb group RING finger protein 5-A (234 aa).

An RING-type zinc finger spans residues 18-57; that stretch reads CSICRGYLIKPTAVTECLHTFCKSCIVQHFEESNECPECG. Positions 97 to 130 are disordered; sequence FWRKHKIKSNGEDGPRAKKSRLSGEDDDGNGGDY.

As to quaternary structure, component of a PRC1-like complex.

Its subcellular location is the nucleus. Functionally, component of Polycomb group (PcG) multiprotein complexes; the complex class is required to maintain the transcriptionally repressive state of some genes. This Danio rerio (Zebrafish) protein is Polycomb group RING finger protein 5-A.